We begin with the raw amino-acid sequence, 102 residues long: NADH-quinone oxidoreductase subunit K (102 aa).

Helical transmembrane passes span 5 to 25 (LTQY…GIIL), 30 to 50 (IIII…NLVA), and 62 to 82 (IFAL…LAIL).

It belongs to the complex I subunit 4L family. In terms of assembly, NDH-1 is composed of 14 different subunits. Subunits NuoA, H, J, K, L, M, N constitute the membrane sector of the complex.

The protein localises to the cell inner membrane. It carries out the reaction a quinone + NADH + 5 H(+)(in) = a quinol + NAD(+) + 4 H(+)(out). In terms of biological role, NDH-1 shuttles electrons from NADH, via FMN and iron-sulfur (Fe-S) centers, to quinones in the respiratory chain. The immediate electron acceptor for the enzyme in this species is believed to be ubiquinone. Couples the redox reaction to proton translocation (for every two electrons transferred, four hydrogen ions are translocated across the cytoplasmic membrane), and thus conserves the redox energy in a proton gradient. The chain is NADH-quinone oxidoreductase subunit K from Beijerinckia indica subsp. indica (strain ATCC 9039 / DSM 1715 / NCIMB 8712).